A 239-amino-acid chain; its full sequence is Large ribosomal subunit protein uL2 (239 aa).

Disordered stretches follow at residues Met-1–Pro-20 and Pro-203–Lys-239. Positions Pro-222 to Lys-239 are enriched in basic residues.

The protein belongs to the universal ribosomal protein uL2 family. In terms of assembly, part of the 50S ribosomal subunit. Forms a bridge to the 30S subunit in the 70S ribosome.

Functionally, one of the primary rRNA binding proteins. Required for association of the 30S and 50S subunits to form the 70S ribosome, for tRNA binding and peptide bond formation. It has been suggested to have peptidyltransferase activity; this is somewhat controversial. Makes several contacts with the 16S rRNA in the 70S ribosome. This is Large ribosomal subunit protein uL2 from Pyrococcus horikoshii (strain ATCC 700860 / DSM 12428 / JCM 9974 / NBRC 100139 / OT-3).